Here is a 233-residue protein sequence, read N- to C-terminus: Protein Atu3128 (233 aa).

This sequence belongs to the glycosyl hydrolase 88 family.

Seems to regulate the surface properties of the bacterium in the presence of plant cells or plant cell extracts. Mutations in this protein are responsible for an increased aggregation of the bacteria in the presence of pea root cap cells. In Agrobacterium fabrum (strain C58 / ATCC 33970) (Agrobacterium tumefaciens (strain C58)), this protein is Protein Atu3128.